A 393-amino-acid polypeptide reads, in one-letter code: Argininosuccinate synthase (393 aa).

Residues 7-15 and alanine 34 each bind ATP; that span reads AYSGGLDTS. 2 residues coordinate L-citrulline: tyrosine 85 and serine 90. Glycine 115 is a binding site for ATP. Positions 117, 121, and 122 each coordinate L-aspartate. Asparagine 121 serves as a coordination point for L-citrulline. L-citrulline-binding residues include arginine 125, serine 176, serine 185, glutamate 261, and tyrosine 273.

It belongs to the argininosuccinate synthase family. Type 1 subfamily. As to quaternary structure, homotetramer.

The protein localises to the cytoplasm. The enzyme catalyses L-citrulline + L-aspartate + ATP = 2-(N(omega)-L-arginino)succinate + AMP + diphosphate + H(+). It functions in the pathway amino-acid biosynthesis; L-arginine biosynthesis; L-arginine from L-ornithine and carbamoyl phosphate: step 2/3. The polypeptide is Argininosuccinate synthase (Ehrlichia chaffeensis (strain ATCC CRL-10679 / Arkansas)).